A 117-amino-acid polypeptide reads, in one-letter code: Large ribosomal subunit protein bL19 (117 aa).

The protein belongs to the bacterial ribosomal protein bL19 family.

Functionally, this protein is located at the 30S-50S ribosomal subunit interface and may play a role in the structure and function of the aminoacyl-tRNA binding site. This chain is Large ribosomal subunit protein bL19, found in Vibrio cholerae serotype O1 (strain ATCC 39541 / Classical Ogawa 395 / O395).